A 685-amino-acid polypeptide reads, in one-letter code: Sodium-dependent phosphate transporter 1-A (685 aa).

The next 6 helical transmembrane spans lie at 21–41, 66–86, 106–126, 162–182, 207–227, and 234–254; these read IMAP…VLAF, ACIL…AKVS, LMAG…AASF, IVLS…LLFL, ACTI…LLGF, and GIIL…WFVV. Disordered regions lie at residues 438–458 and 483–513; these read RNRD…HGAD and EAEE…HDQD. Residues 483–496 show a composition bias toward acidic residues; sequence EAEEQEEGSVEDVE. Over residues 497 to 513 the composition is skewed to basic and acidic residues; the sequence is TDRKSSSSSLEERHDQD. 4 helical membrane passes run 517 to 537, 565 to 585, 606 to 626, and 656 to 676; these read VSLL…FAHG, ATPI…LWVW, FSIE…GLPI, and IFLA…GIMA.

Belongs to the inorganic phosphate transporter (PiT) (TC 2.A.20) family.

It is found in the membrane. Functionally, sodium-phosphate symporter which plays a fundamental housekeeping role in phosphate transport. This chain is Sodium-dependent phosphate transporter 1-A (slc20a1-a), found in Xenopus laevis (African clawed frog).